A 124-amino-acid polypeptide reads, in one-letter code: Acidic phospholipase A2 A (124 aa).

7 cysteine pairs are disulfide-bonded: Cys-26/Cys-116, Cys-28/Cys-44, Cys-43/Cys-95, Cys-49/Cys-124, Cys-50/Cys-88, Cys-57/Cys-81, and Cys-75/Cys-86. 3 residues coordinate Ca(2+): Tyr-27, Gly-29, and Gly-31. The active site involves His-47. Asp-48 lines the Ca(2+) pocket. The active site involves Asp-89.

This sequence belongs to the phospholipase A2 family. Group II subfamily. D49 sub-subfamily. The cofactor is Ca(2+). In terms of tissue distribution, expressed by the venom gland.

Its subcellular location is the secreted. It catalyses the reaction a 1,2-diacyl-sn-glycero-3-phosphocholine + H2O = a 1-acyl-sn-glycero-3-phosphocholine + a fatty acid + H(+). PLA2 catalyzes the calcium-dependent hydrolysis of the 2-acyl groups in 3-sn-phosphoglycerides. The protein is Acidic phospholipase A2 A of Gloydius halys (Chinese water mocassin).